Here is a 457-residue protein sequence, read N- to C-terminus: MPPSSGQLLGDEEREPTSTPAIPEEGVYKVKYSNRRTNIVRLLPNGFQERKLRRLADLSAKLFNEVNYERRQQFFHEGKVDIKGTYKKYYEKYKEKLRTNAQAVLNKNNEAWSSFFSLLNLKKEGKLPQHIKHVSPPGYCKDRKTKKRKLILIVRQDRYKVDAENNKLILKDFNMEIEFVGRLRWYGKQGRLEIIFDETRNAWYAHIPVEVGVEETGKKSKHVVKGERKSIQIAKPKGNKVASIDLGINVIASVVVSDGTWLLYKGIRTKEDYFYFHKRIAEVQSLADRTRNIGEYEAYLELLREERRLFKKLKRRLLHLYRNLASHLIKTLHELGVSTIYLGNPFNIVQEKGDNFMTDKWPYRKLMHAIELKAQEYGMKVYEVDEYNTTKYCAYHDVKVKRNPRGVVICPKGHKLHSDLNGALNILKKAVGVVVNEVKKPLSFIVDHNRVAPIKGV.

Residues 1–22 (MPPSSGQLLGDEEREPTSTPAI) are disordered.

In the N-terminal section; belongs to the transposase 2 family. The protein in the C-terminal section; belongs to the transposase 35 family.

The chain is TnpB-like protein ORF457 from Acidianus two-tailed virus (ATV).